A 464-amino-acid chain; its full sequence is Histidine--tRNA ligase (464 aa).

The protein belongs to the class-II aminoacyl-tRNA synthetase family. Homodimer.

It localises to the cytoplasm. It carries out the reaction tRNA(His) + L-histidine + ATP = L-histidyl-tRNA(His) + AMP + diphosphate + H(+). The protein is Histidine--tRNA ligase of Stenotrophomonas maltophilia (strain K279a).